An 89-amino-acid chain; its full sequence is uncharacterized protein (89 aa).

A disordered region spans residues 66 to 89 (RIKEQSSSSSATRTTQEPSLHLPD).

This is an uncharacterized protein from Cestrum parqui (CmYLCV).